The following is a 213-amino-acid chain: DPNSPQYLGDLFSWSAIGARTTESQTHREMASGLSMPVGFKNGTDGSLGTAINAMRAAAMPHRFVGINQAGQVCLLQTQGNPDGHVILRGGKAPNYGPEDVAQCEKEMLKAGLRPALMIDCSHGNSNKDYSRQPGVAESAIAQIKDGNRSIIGLMLESHINEGNQSSEQPRSEMKYGVSVTDACINWEVTETLLREMHQDLQGVLSARLSQEV.

It belongs to the class-I DAHP synthase family.

The catalysed reaction is D-erythrose 4-phosphate + phosphoenolpyruvate + H2O = 7-phospho-2-dehydro-3-deoxy-D-arabino-heptonate + phosphate. Its pathway is metabolic intermediate biosynthesis; chorismate biosynthesis; chorismate from D-erythrose 4-phosphate and phosphoenolpyruvate: step 1/7. Its function is as follows. Stereospecific condensation of phosphoenolpyruvate (PEP) and D-erythrose-4-phosphate (E4P) giving rise to 3-deoxy-D-arabino-heptulosonate-7-phosphate (DAHP). This chain is Phospho-2-dehydro-3-deoxyheptonate aldolase, Tyr-sensitive (aroF), found in Enterobacter agglomerans (Erwinia herbicola).